The primary structure comprises 182 residues: uncharacterized protein (182 aa).

4 helical membrane passes run 19–39, 51–71, 87–107, and 118–138; these read LFGI…SIVS, IYLV…VVFI, IFTV…IELF, and CSPF…LAMC.

It localises to the membrane. This is an uncharacterized protein from Caenorhabditis elegans.